Reading from the N-terminus, the 303-residue chain is Thyrotroph embryonic factor (303 aa).

Disordered regions lie at residues 1–63 (MSDA…KLEE) and 132–176 (ESAS…DPNC). Phosphoserine is present on S32. A compositionally biased stretch (basic and acidic residues) spans 41 to 61 (KLMENPPREARLDKEKGKEKL). The span at 133–160 (SASSSTASPPSSSTAIFQPSETVSSTES) shows a compositional bias: low complexity. Residues 233–296 (DEKYWTRRKK…GKCKTIVSKY (64 aa)) enclose the bZIP domain. Positions 235-255 (KYWTRRKKNNVAAKRSRDARR) are basic motif. The segment at 256-263 (LKENQITI) is leucine-zipper.

Belongs to the bZIP family. PAR subfamily. Binds DNA as a homodimer or a heterodimer. Can form a heterodimer with DBP.

The protein localises to the nucleus. In terms of biological role, transcription factor that binds to and transactivates the TSHB promoter. Binds to a minimal DNA-binding sequence 5'-[TC][AG][AG]TTA[TC][AG]-3'. The chain is Thyrotroph embryonic factor (TEF) from Homo sapiens (Human).